The primary structure comprises 120 residues: UPF0231 protein YacL (120 aa).

It belongs to the UPF0231 family.

This Escherichia coli O81 (strain ED1a) protein is UPF0231 protein YacL.